The sequence spans 418 residues: Tyrosine--tRNA ligase (418 aa).

Tyr-34 lines the L-tyrosine pocket. The 'HIGH' region motif lies at 39–48 (PTADSLHLGH). Residues Tyr-169 and Gln-173 each coordinate L-tyrosine. The short motif at 229 to 233 (KFGKS) is the 'KMSKS' region element. Position 232 (Lys-232) interacts with ATP. Residues 352 to 410 (LNIVELLVTSGIVNSKRQAREDVQNGAIYVNGERVQDLDYTLSDSDKIDGELTVIRRGK) form the S4 RNA-binding domain.

It belongs to the class-I aminoacyl-tRNA synthetase family. TyrS type 1 subfamily. In terms of assembly, homodimer.

Its subcellular location is the cytoplasm. It catalyses the reaction tRNA(Tyr) + L-tyrosine + ATP = L-tyrosyl-tRNA(Tyr) + AMP + diphosphate + H(+). Catalyzes the attachment of tyrosine to tRNA(Tyr) in a two-step reaction: tyrosine is first activated by ATP to form Tyr-AMP and then transferred to the acceptor end of tRNA(Tyr). The sequence is that of Tyrosine--tRNA ligase from Streptococcus suis (strain 98HAH33).